We begin with the raw amino-acid sequence, 283 residues long: Non-selective voltage-gated ion channel 1 (283 aa).

The ATP site is built by arginine 11 and lysine 19. Phosphoserine is present on serine 109. Threonine 117 bears the Phosphothreonine mark.

The protein belongs to the eukaryotic mitochondrial porin family. In terms of assembly, homodimer. Interacts with FCJ1. Interacts with AIM5. Interacts.

It localises to the mitochondrion outer membrane. Its function is as follows. Non-selective voltage-gated ion channel that mediates the transport of anions and cations through the mitochondrion outer membrane. The channel adopts an open conformation at low or zero membrane potential and a closed conformation at potentials above 30-40 mV. The open state has a weak anion selectivity whereas the closed state is cation-selective. Is the major permeability factor of the mitochondrial outer membrane. Catalyzes the scrambling of phospholipids across the outer mitochondrial membrane; the mechanism is unrelated to channel activity and is capable of translocating both anionic and zwitterionic phospholipids. The polypeptide is Non-selective voltage-gated ion channel 1 (POR1) (Saccharomyces cerevisiae (strain ATCC 204508 / S288c) (Baker's yeast)).